A 355-amino-acid chain; its full sequence is Heat-inducible transcription repressor HrcA (355 aa).

The protein belongs to the HrcA family.

Negative regulator of class I heat shock genes (grpE-dnaK-dnaJ and groELS operons). Prevents heat-shock induction of these operons. This chain is Heat-inducible transcription repressor HrcA, found in Prosthecochloris aestuarii (strain DSM 271 / SK 413).